The following is a 450-amino-acid chain: Sorting nexin-4 (450 aa).

Met-1 is modified (N-acetylmethionine). The tract at residues 1–46 is disordered; it reads MEQAPPDPERQLQPAPLEPLGSPDAVLGAAVGKETEGAGEESSGVD. Ser-22 is subject to Phosphoserine. Residues 61–187 enclose the PX domain; it reads SVSEAEKRTG…YLFLTQEGNW (127 aa). Residues Arg-106, Ser-108, Lys-132, and Arg-154 each contribute to the a 1,2-diacyl-sn-glycero-3-phospho-(1D-myo-inositol-3-phosphate) site.

This sequence belongs to the sorting nexin family. As to quaternary structure, heterodimer; heterodimerizes with SNX7 or SNX30. Interacts with WWC1/KIBRA. Identified in a complex with WWC1/KIBRA and dynein components DYNLL1 and DYNC1I2. Interacts with BIN1.

Its subcellular location is the early endosome. The protein localises to the early endosome membrane. Its function is as follows. Involved in the regulation of endocytosis and in several stages of intracellular trafficking. Plays a role in recycling endocytosed transferrin receptor and prevent its degradation. Involved in autophagosome assembly by regulating trafficking and recycling of phospholipid scramblase ATG9A. In Pongo abelii (Sumatran orangutan), this protein is Sorting nexin-4.